We begin with the raw amino-acid sequence, 396 residues long: AVNPTGCDAVEPVAVRALDLINKGRDGYLFQLLRVADAHLDKVESIAVYYLVESDCPVLSRKHWDDCELNVTVIGQCKLAGPEDLSVNDFNCTTSSVSSALTNMRARGGEGTSYFLDFSVRNCSSHHFPRHHIFGFCRADLFYDVEASDLETPKDIVTNCEVFHRRFSAVQHHLGRPFHSGEHEHSPAGRPPFKPSGSKDHGHPHESYNFRCPPPLEHKNHSDSPPFQARAPLPFPPPGLRCPHPPFGTKGNHRPPHDHSSDEHHPHGHHPHGHHPHGHHPHGHHPPDNDFYDHGPCDPPPHRPPPRHSKERGPGKGHFRFHWRPTGYIHRLPSLKKGEVLPLPEANFPSFSLPNHNNPLQPEIQAFPQSASESCPGTFNIKFLHISKFFAYTLPK.

Cystatin domains follow at residues 1 to 102 and 103 to 169; these read AVNP…SALT and NMRA…RFSA. Cystine bridges form between cysteine 7–cysteine 375, cysteine 56–cysteine 67, cysteine 77–cysteine 92, cysteine 123–cysteine 297, cysteine 137–cysteine 160, and cysteine 212–cysteine 242. N-linked (GlcNAc...) asparagine; partial glycosylation is present at asparagine 70. N-linked (GlcNAc...) asparagine glycosylation is found at asparagine 91 and asparagine 122. Residues 176-322 are disordered; sequence RPFHSGEHEH…GPGKGHFRFH (147 aa). The segment covering 197-208 has biased composition (basic and acidic residues); the sequence is GSKDHGHPHESY. Asparagine 220 carries an N-linked (GlcNAc...) asparagine glycan. The span at 233–246 shows a compositional bias: pro residues; it reads LPFPPPGLRCPHPP. The span at 255–265 shows a compositional bias: basic and acidic residues; the sequence is PPHDHSSDEHH. Basic residues predominate over residues 266–284; the sequence is PHGHHPHGHHPHGHHPHGH. The segment covering 285–296 has biased composition (basic and acidic residues); sequence HPPDNDFYDHGP. The segment covering 304-322 has biased composition (basic residues); that stretch reads PPPRHSKERGPGKGHFRFH. Position 309 is a phosphoserine (serine 309).

In terms of assembly, interacts (via the HRR domain) with TPM1; the interaction appears to contribute to the antiangiogenic properties of the HRR domain. Interacts with THBS1 (via the TSP type I repeats); the interaction blocks the antiangiogenic effect of THBS1 with CD36. Interacts with PLG (via its Kringle domains); the interaction tethers PLG to the cell surface and enhances its activation. Interacts with THBS2; the interaction blocks the antiangiogenic effect of THBS2 with CD36. Interacts with HPSE; the interaction is enhanced at acidic pH, partially inhibits binding of HPSE to cell surface receptors and modulates its enzymatic activity. Interacts (via the HRR domain) with TMP1; the interaction partially mediates the antiangiogenic properties of HRG. Interacts with kappa and lambda light chains of IgG molecules. Interacts with ATP5F1A; the interaction occurs on the surface of T-cells and alters their cell morphology in concert with CONA. Binds IgG molecules containing kappa and lambda light chains and inhibits the formation of insoluble immunoglobulin complexes. Interacts with F12; the interaction, which is enhanced in the presence of zinc ions and inhibited by heparin-binding to HRG, inhibits factor XII autoactivation and contact-initiated coagulation. In terms of processing, N-glycosylated. Post-translationally, proteolytic cleavage produces several HRG fragments which are mostly disulfide-linked and, therefore, not released. On platelet activation, may release a 33 kDa antiangiogenic peptide which encompasses the HRR.

The protein localises to the secreted. Its function is as follows. Plasma glycoprotein that binds a number of ligands such as heme, heparin, heparan sulfate, thrombospondin, plasminogen, and divalent metal ions. Inhibits rosette formation. Acts as an adapter protein and implicated in regulating many processes such as immune complex and pathogen clearance, cell adhesion, angiogenesis, coagulation and fibrinolysis. Mediates clearance of necrotic cells through enhancing the phagocytosis of necrotic cells in a heparan sulfate-dependent pathway. This process can be regulated by the presence of certain HRG ligands such as heparin and zinc ions. Binds to IgG subclasses of immunoglobins containing kappa and lambda light chains with different affinities regulating their clearance and inhibiting the formation of insoluble immune complexes. Tethers plasminogen to the cell surface. Binds T-cells and alters the cell morphology. Modulates angiogenesis by blocking the CD6-mediated antiangiongenic effect of thrombospondins, THBS1 and THBS2. The chain is Histidine-rich glycoprotein (HRG) from Bos taurus (Bovine).